Reading from the N-terminus, the 67-residue chain is MKLLLLTLTVLLLLSQLTPGGTQRCWNLYGKCRHRCSKKERVYVYCLNNKMCCVKPKYQPKEKWWPF.

A signal peptide spans 1–20 (MKLLLLTLTVLLLLSQLTPG). 3 cysteine pairs are disulfide-bonded: cysteine 25–cysteine 52, cysteine 32–cysteine 46, and cysteine 36–cysteine 53.

It belongs to the beta-defensin family. Abundant expression in the male reproductive tract only. Expressed abundantly in testis, while expression in epididymis decreased gradually from caput to cauda.

It localises to the secreted. Functionally, has antibacterial activity. The chain is Beta-defensin 123 (DEFB123) from Macaca mulatta (Rhesus macaque).